The following is a 230-amino-acid chain: Ly6/PLAUR domain-containing protein 8 (230 aa).

A signal peptide spans 1–20; sequence MKSFLFAGIVVVLTVAAVDT. 13 N-linked (GlcNAc...) asparagine glycosylation sites follow: Asn37, Asn44, Asn74, Asn77, Asn90, Asn106, Asn110, Asn132, Asn137, Asn156, Asn168, Asn181, and Asn197. One can recognise a UPAR/Ly6 domain in the interval 125 to 172; sequence CPACYGNNETSCNETRKCYGERCVSIIAEFTNETKTLVLKGCSNVSIS. Ser211 is lipidated: GPI-anchor amidated serine. Residues 212–230 constitute a propeptide, removed in mature form; it reads QASFTPLALASILLLSLLL.

It belongs to the CNF-like-inhibitor family. Post-translationally, highly N-glycosylated. Not O-glycosylated. In terms of processing, GPI-anchored. The GPI-anchor is cleaved, leading to secretion into the colonic lumen.

The protein resides in the cell membrane. The protein localises to the secreted. Functionally, secreted protein specifically required to prevent invasion of Gram-negative bacteria in the inner mucus layer of the colon epithelium, a portion of the large intestine which is free of commensal microbiota. Prevents invasion of flagellated microbiota by binding to the flagellum of bacteria, such as P.mirabilis, thereby inhibiting bacterial motility in the intestinal lumen. Segregation of intestinal bacteria and epithelial cells in the colon is required to preserve intestinal homeostasis. This chain is Ly6/PLAUR domain-containing protein 8 (LYPD8), found in Bos taurus (Bovine).